Reading from the N-terminus, the 96-residue chain is Small ribosomal subunit protein bS6 (96 aa).

Belongs to the bacterial ribosomal protein bS6 family.

In terms of biological role, binds together with bS18 to 16S ribosomal RNA. This Bacillus thuringiensis subsp. konkukian (strain 97-27) protein is Small ribosomal subunit protein bS6.